A 48-amino-acid polypeptide reads, in one-letter code: Bacteriocin plantaricin-A (48 aa).

Residues 1–25 constitute a propeptide that is removed on maturation; the sequence is MKIQIKGMKQLSNKEMQKIVGGKSS.

Active plantaricin A is composed of an alpha chain and a beta chain.

In terms of biological role, this heat stable bacteriocin inhibits the growth of closely related Lactobacillus species. It may act as a pore-forming protein, creating a channel in the cell membrane through a 'barrel stave' mechanism. The polypeptide is Bacteriocin plantaricin-A (plnA) (Lactiplantibacillus plantarum (strain ATCC BAA-793 / NCIMB 8826 / WCFS1) (Lactobacillus plantarum)).